Reading from the N-terminus, the 60-residue chain is Sperm protamine P1 (60 aa).

Residues 1–60 (MARYRHSRSRSRSRYRRRRRRRSRYRSQRRRYRGRRRRRSRRGRRRGYSRRRYSRRRRRY) form a disordered region.

It belongs to the protamine P1 family. Testis.

It is found in the nucleus. The protein localises to the chromosome. Its function is as follows. Protamines substitute for histones in the chromatin of sperm during the haploid phase of spermatogenesis. They compact sperm DNA into a highly condensed, stable and inactive complex. In Osphranter rufus (Red kangaroo), this protein is Sperm protamine P1 (PRM1).